Reading from the N-terminus, the 303-residue chain is Protein-lysine N-methyltransferase rrg1 (303 aa).

Residues W117, 143 to 145, D165, W198, and S221 contribute to the S-adenosyl-L-methionine site; that span reads GAG.

It belongs to the class I-like SAM-binding methyltransferase superfamily. METTL21 family.

It localises to the cytoplasm. The protein localises to the nucleus. In terms of biological role, S-adenosyl-L-methionine-dependent protein-lysine N-methyltransferase that methylates elongation factor 2 and elongation factor 3A. The polypeptide is Protein-lysine N-methyltransferase rrg1 (Schizosaccharomyces pombe (strain 972 / ATCC 24843) (Fission yeast)).